The sequence spans 432 residues: Adenylosuccinate synthetase (432 aa).

GTP-binding positions include 13–19 and 41–43; these read GDEGKGK and GHT. D14 acts as the Proton acceptor in catalysis. Mg(2+) is bound by residues D14 and G41. IMP-binding positions include 14–17, 39–42, T130, R144, Q225, T240, and R306; these read DEGK and NAGH. Residue H42 is the Proton donor of the active site. 302–308 lines the substrate pocket; sequence TVTGRAR. GTP-binding positions include R308, 334–336, and 416–418; these read KLD and STG.

The protein belongs to the adenylosuccinate synthetase family. As to quaternary structure, homodimer. Requires Mg(2+) as cofactor.

The protein localises to the cytoplasm. The catalysed reaction is IMP + L-aspartate + GTP = N(6)-(1,2-dicarboxyethyl)-AMP + GDP + phosphate + 2 H(+). It functions in the pathway purine metabolism; AMP biosynthesis via de novo pathway; AMP from IMP: step 1/2. Plays an important role in the de novo pathway of purine nucleotide biosynthesis. Catalyzes the first committed step in the biosynthesis of AMP from IMP. This chain is Adenylosuccinate synthetase, found in Herminiimonas arsenicoxydans.